The chain runs to 396 residues: Tryptophan synthase beta chain (396 aa).

K86 is modified (N6-(pyridoxal phosphate)lysine).

Belongs to the TrpB family. In terms of assembly, tetramer of two alpha and two beta chains. Requires pyridoxal 5'-phosphate as cofactor.

It catalyses the reaction (1S,2R)-1-C-(indol-3-yl)glycerol 3-phosphate + L-serine = D-glyceraldehyde 3-phosphate + L-tryptophan + H2O. The protein operates within amino-acid biosynthesis; L-tryptophan biosynthesis; L-tryptophan from chorismate: step 5/5. Its function is as follows. The beta subunit is responsible for the synthesis of L-tryptophan from indole and L-serine. In Aliivibrio salmonicida (strain LFI1238) (Vibrio salmonicida (strain LFI1238)), this protein is Tryptophan synthase beta chain.